A 96-amino-acid polypeptide reads, in one-letter code: MPPPRGKGRFGKDKRPKRNTQSLLFRRKRFCRFTVTGVTEIDYKDVDTLRDFIAENGKITPARLTGTRAFFQRQLSTCIKRARFLALLPYSDQHKS.

The span at 1–18 (MPPPRGKGRFGKDKRPKR) shows a compositional bias: basic residues. Residues 1-21 (MPPPRGKGRFGKDKRPKRNTQ) form a disordered region.

It belongs to the bacterial ribosomal protein bS18 family. In terms of assembly, part of the 30S ribosomal subunit. Forms a tight heterodimer with protein bS6.

In terms of biological role, binds as a heterodimer with protein bS6 to the central domain of the 16S rRNA, where it helps stabilize the platform of the 30S subunit. This is Small ribosomal subunit protein bS18 from Methylibium petroleiphilum (strain ATCC BAA-1232 / LMG 22953 / PM1).